The sequence spans 246 residues: Probable septum site-determining protein MinC (246 aa).

This sequence belongs to the MinC family. As to quaternary structure, interacts with MinD and FtsZ.

Functionally, cell division inhibitor that blocks the formation of polar Z ring septums. Rapidly oscillates between the poles of the cell to destabilize FtsZ filaments that have formed before they mature into polar Z rings. Prevents FtsZ polymerization. This chain is Probable septum site-determining protein MinC, found in Pseudomonas syringae pv. tomato (strain ATCC BAA-871 / DC3000).